We begin with the raw amino-acid sequence, 175 residues long: Bcl-2-related protein A1 (175 aa).

The short motif at 77–97 (KEFEDGIINWGRIVTIFAFEG) is the BH1 element. The short motif at 132–147 (EWIRQNGGWENGFVKK) is the BH2 element.

Belongs to the Bcl-2 family. Interacts directly with BAK1, BID, BMF and BBC3. Interacts directly with BCL2L11/BIM. Interacts with BAX isoform Sigma. Interacts directly with PMAIP1. Interacts with RTL10/BOP. Interacts with ING4. Interacts with UBQLN4. In terms of tissue distribution, seems to be restricted to the hematopoietic compartment. Expressed in peripheral blood, spleen, and bone marrow, at moderate levels in lung, small intestine and testis, at a minimal levels in other tissues. Also found in vascular smooth muscle cells and hematopoietic malignancies.

Its subcellular location is the cytoplasm. In terms of biological role, retards apoptosis induced by IL-3 deprivation. May function in the response of hemopoietic cells to external signals and in maintaining endothelial survival during infection. Can inhibit apoptosis induced by serum starvation in the mammary epithelial cell line HC11. The chain is Bcl-2-related protein A1 (BCL2A1) from Homo sapiens (Human).